Consider the following 466-residue polypeptide: Probable Xaa-Pro aminopeptidase pepP (466 aa).

Residues D264, D275, E398, and E438 each contribute to the Mn(2+) site.

This sequence belongs to the peptidase M24B family. Mn(2+) is required as a cofactor.

It carries out the reaction Release of any N-terminal amino acid, including proline, that is linked to proline, even from a dipeptide or tripeptide.. Its function is as follows. Catalyzes the removal of a penultimate prolyl residue from the N-termini of peptides. This Aspergillus niger (strain ATCC MYA-4892 / CBS 513.88 / FGSC A1513) protein is Probable Xaa-Pro aminopeptidase pepP (pepP).